The chain runs to 339 residues: Glycerol-3-phosphate dehydrogenase [NAD(P)+] (339 aa).

Residues S31, W32, R52, and K122 each coordinate NADPH. 2 residues coordinate sn-glycerol 3-phosphate: K122 and G152. An NADPH-binding site is contributed by A156. 5 residues coordinate sn-glycerol 3-phosphate: K207, D260, S270, R271, and N272. The active-site Proton acceptor is K207. An NADPH-binding site is contributed by R271. E293 is an NADPH binding site.

The protein belongs to the NAD-dependent glycerol-3-phosphate dehydrogenase family.

The protein localises to the cytoplasm. It carries out the reaction sn-glycerol 3-phosphate + NAD(+) = dihydroxyacetone phosphate + NADH + H(+). The enzyme catalyses sn-glycerol 3-phosphate + NADP(+) = dihydroxyacetone phosphate + NADPH + H(+). The protein operates within membrane lipid metabolism; glycerophospholipid metabolism. In terms of biological role, catalyzes the reduction of the glycolytic intermediate dihydroxyacetone phosphate (DHAP) to sn-glycerol 3-phosphate (G3P), the key precursor for phospholipid synthesis. The protein is Glycerol-3-phosphate dehydrogenase [NAD(P)+] of Tropheryma whipplei (strain Twist) (Whipple's bacillus).